The primary structure comprises 120 residues: ATP synthase subunit a (120 aa).

Helical transmembrane passes span Phe-2–Leu-22, Phe-29–Val-49, Leu-59–Tyr-79, and Ile-94–Gly-116.

Belongs to the ATPase A chain family. In terms of assembly, F-type ATPases have 2 components, CF(1) - the catalytic core - and CF(0) - the membrane proton channel. CF(1) has five subunits: alpha(3), beta(3), gamma(1), delta(1), epsilon(1). CF(0) has three main subunits: a, b and c.

Its subcellular location is the mitochondrion inner membrane. Its function is as follows. Mitochondrial membrane ATP synthase (F(1)F(0) ATP synthase or Complex V) produces ATP from ADP in the presence of a proton gradient across the membrane which is generated by electron transport complexes of the respiratory chain. F-type ATPases consist of two structural domains, F(1) - containing the extramembraneous catalytic core and F(0) - containing the membrane proton channel, linked together by a central stalk and a peripheral stalk. During catalysis, ATP synthesis in the catalytic domain of F(1) is coupled via a rotary mechanism of the central stalk subunits to proton translocation. Key component of the proton channel; it may play a direct role in the translocation of protons across the membrane. This is ATP synthase subunit a (ATP6) from Naegleria fowleri (Brain eating amoeba).